A 308-amino-acid polypeptide reads, in one-letter code: Glutaminase (308 aa).

Substrate-binding residues include Ser66, Asn117, Glu161, Asn168, Tyr192, Tyr244, and Val262.

This sequence belongs to the glutaminase family. In terms of assembly, homotetramer.

It carries out the reaction L-glutamine + H2O = L-glutamate + NH4(+). This is Glutaminase from Klebsiella pneumoniae (strain 342).